The primary structure comprises 244 residues: Salivary antigen-5 (244 aa).

The signal sequence occupies residues 1–23 (MAKAHSSLVFCLLALALVRFAQA). One can recognise an SCP domain in the interval 46 to 202 (LDFHNKFREL…WYTGYLVCNY (157 aa)). N-linked (GlcNAc...) asparagine glycans are attached at residues asparagine 106 and asparagine 172.

The protein belongs to the CRISP family. Venom allergen 5-like subfamily. Salivary gland (at protein level).

The protein localises to the secreted. Its function is as follows. Inhibits host platelet aggregation induced by low doses of collagen. The sequence is that of Salivary antigen-5 from Triatoma infestans (Assassin bug).